A 107-amino-acid polypeptide reads, in one-letter code: ATPase inhibitor, mitochondrial (107 aa).

Residues 1-25 (MAGSALAVRARLGVWGMRVLQTRGF) constitute a mitochondrion transit peptide. The disordered stretch occupies residues 25–58 (FGSDSSESMDSGAGSIREAGGAFGKREKAEEDRY). The N-terminal inhibitory region stretch occupies residues 26-52 (GSDSSESMDSGAGSIREAGGAFGKREK). Phosphoserine is present on serine 39. Residues 48–58 (GKREKAEEDRY) show a composition bias toward basic and acidic residues. Residues 60-107 (REKTREQLAALKKHHEDEIDHHSKEIERLQKQIERHKKKIKYLKNSEH) are a coiled coil. Positions 74–106 (HEDEIDHHSKEIERLQKQIERHKKKIKYLKNSE) are antiparallel alpha-helical coiled coil region. At lysine 103 the chain carries N6-succinyllysine.

The protein belongs to the ATPase inhibitor family. Homodimer; represents the active form and is present at a pH value below 6.5. Homotetramer; represents the inactive form and is present at a pH value above 7.0.

It is found in the mitochondrion. Its function is as follows. Endogenous F(1)F(o)-ATPase inhibitor limiting ATP depletion when the mitochondrial membrane potential falls below a threshold and the F(1)F(o)-ATP synthase starts hydrolyzing ATP to pump protons out of the mitochondrial matrix. Required to avoid the consumption of cellular ATP when the F(1)F(o)-ATP synthase enzyme acts as an ATP hydrolase. Indirectly acts as a regulator of heme synthesis in erythroid tissues: regulates heme synthesis by modulating the mitochondrial pH and redox potential, allowing FECH to efficiently catalyze the incorporation of iron into protoporphyrin IX to produce heme. This is ATPase inhibitor, mitochondrial from Rattus norvegicus (Rat).